We begin with the raw amino-acid sequence, 379 residues long: Epoxyqueuosine reductase (379 aa).

Asp-139 acts as the Proton donor in catalysis. In terms of domain architecture, 4Fe-4S ferredoxin-type spans 181–213 (IPLPVDQPVEEGCGKCVACMTICPTGAIVEPYT). 8 residues coordinate [4Fe-4S] cluster: Cys-193, Cys-196, Cys-199, Cys-203, Cys-219, Cys-246, Cys-249, and Cys-253.

The protein belongs to the QueG family. Monomer. Cob(II)alamin serves as cofactor. [4Fe-4S] cluster is required as a cofactor.

It localises to the cytoplasm. It catalyses the reaction epoxyqueuosine(34) in tRNA + AH2 = queuosine(34) in tRNA + A + H2O. Its pathway is tRNA modification; tRNA-queuosine biosynthesis. In terms of biological role, catalyzes the conversion of epoxyqueuosine (oQ) to queuosine (Q), which is a hypermodified base found in the wobble positions of tRNA(Asp), tRNA(Asn), tRNA(His) and tRNA(Tyr). This Shigella dysenteriae serotype 1 (strain Sd197) protein is Epoxyqueuosine reductase.